Reading from the N-terminus, the 603-residue chain is MIRQCLSRRAACPCYRIAAGGTELTGCLYPQSSRISRRGRDWSSTSRRAIDTQTSGASNGADYVPLRKQLKEQAREGRAATRKGEVSPPEHEDWELTVGIEIHAQLDTDTKLFSRASAAIDDVPNSNVALFDIALPGSQPLFQPATLIPALRAAIALNCDVQRVSRFDRKHYFYQDQPAGYQITQYYEPYAKNGSIWLGPHDGIAKEDGVGVKIGIKQIQLEQDTAKSQELPSSTYLLDFNRVSRPLIEIITLPQIHSPATAAACVRKIQTILQSVGAVTTGMEMGGLRADVNVSVRKRSEGVGDHQYHGITGLGQRTEIKNLSSFKAVENAIIAERDRQIAVLRAGGAIEGETRGWTLGSTETRKLRGKEGEVDYRYMPDPDLGPVIIGIDVFFELKAKLPVLPDALLQSLVQDPKYGLSTDDAKALIELDDGDRLDYYKDAVDILITLQKDLSDDFSGGGKVVGNWVLHELGGLLTKSNLHWDSERVPAQSLAEIINLLSRNKITGSTAKSLLAMVFDGDKRSISQIVEDENLLLQSLSREEYIALAEEVMRQNPKMVMEICEKRQLGKIGWLVGQIKQIGDRNRVEAQKAEEILRELILK.

Disordered stretches follow at residues 38 to 61 and 72 to 91; these read RGRD…SNGA and EQAR…PPEH. Over residues 42–58 the composition is skewed to polar residues; sequence WSSTSRRAIDTQTSGAS.

It belongs to the GatB/GatE family. GatB subfamily. In terms of assembly, subunit of the heterotrimeric GatCAB amidotransferase (AdT) complex, composed of A, B and C subunits.

It is found in the mitochondrion. The enzyme catalyses L-glutamyl-tRNA(Gln) + L-glutamine + ATP + H2O = L-glutaminyl-tRNA(Gln) + L-glutamate + ADP + phosphate + H(+). In terms of biological role, allows the formation of correctly charged Gln-tRNA(Gln) through the transamidation of misacylated Glu-tRNA(Gln) in the mitochondria. The reaction takes place in the presence of glutamine and ATP through an activated gamma-phospho-Glu-tRNA(Gln). The polypeptide is Glutamyl-tRNA(Gln) amidotransferase subunit B, mitochondrial (Paracoccidioides brasiliensis (strain Pb18)).